The following is a 108-amino-acid chain: Insulin (108 aa).

A signal peptide spans Met1–Thr21. 3 disulfides stabilise this stretch: Cys30-Cys94, Cys42-Cys107, and Cys93-Cys98. The propeptide at Asp54–Ile84 is c peptide.

Belongs to the insulin family. As to quaternary structure, heterodimer of a B chain and an A chain linked by two disulfide bonds.

It is found in the secreted. Functionally, insulin decreases blood glucose concentration. It increases cell permeability to monosaccharides, amino acids and fatty acids. It accelerates glycolysis, the pentose phosphate cycle, and glycogen synthesis in liver. This is Insulin (ins) from Danio rerio (Zebrafish).